A 932-amino-acid polypeptide reads, in one-letter code: Protocadherin gamma-A8 (932 aa).

The signal sequence occupies residues 1-29; sequence MAAPQSRPRRGELILLCALLGTLWEIGRG. Cadherin domains are found at residues 30–133, 134–242, 243–347, 348–452, 453–562, and 570–682; these read QIRY…NPKF, QVED…APVF, PHPI…RPEV, IITS…PPTF, PHAS…APEI, and DGST…KPSV. Residues 30–692 are Extracellular-facing; the sequence is QIRYSVPEET…DPNDSSLTLY (663 aa). The N-linked (GlcNAc...) asparagine glycan is linked to N47. Residues N414, N419, and N545 are each glycosylated (N-linked (GlcNAc...) asparagine). A glycan (N-linked (GlcNAc...) asparagine) is linked at N685. A helical membrane pass occupies residues 693-713; the sequence is LVVAVAAISCVFLAFVAVLLG. The Cytoplasmic segment spans residues 714–932; it reads LRLRRWHKSH…KKKSGKKEKK (219 aa). Disordered regions lie at residues 804-841 and 902-932; these read ADHG…WPNN and ATLT…KEKK. A compositionally biased stretch (polar residues) spans 810-841; it reads APPNTDWRFSQAQRPGTSGSQNGDDTGTWPNN. Over residues 922 to 932 the composition is skewed to basic residues; that stretch reads NKKKSGKKEKK.

It is found in the cell membrane. Its function is as follows. Potential calcium-dependent cell-adhesion protein. May be involved in the establishment and maintenance of specific neuronal connections in the brain. The protein is Protocadherin gamma-A8 (PCDHGA8) of Pan troglodytes (Chimpanzee).